The following is a 216-amino-acid chain: Putative ripening-related protein 4 (216 aa).

The signal sequence occupies residues 1-25 (MAANVKVLVVLALLQLMSLHAVVHG).

Belongs to the kiwellin family.

It localises to the secreted. This Oryza sativa subsp. japonica (Rice) protein is Putative ripening-related protein 4.